The sequence spans 68 residues: MEC1-mediated checkpoint protein HUG1 (68 aa).

It localises to the cytoplasm. The protein localises to the nucleus. In terms of biological role, involved in the MEC1-mediated checkpoint response to DNA damage and replication arrest. This chain is MEC1-mediated checkpoint protein HUG1 (HUG1), found in Saccharomyces cerevisiae (strain ATCC 204508 / S288c) (Baker's yeast).